We begin with the raw amino-acid sequence, 92 residues long: Exodeoxyribonuclease 7 small subunit (92 aa).

A disordered region spans residues 1-22; that stretch reads MPKKNAISESTNSTPETAPAMT. The segment covering 7–16 has biased composition (polar residues); that stretch reads ISESTNSTPE.

This sequence belongs to the XseB family. As to quaternary structure, heterooligomer composed of large and small subunits.

The protein resides in the cytoplasm. It carries out the reaction Exonucleolytic cleavage in either 5'- to 3'- or 3'- to 5'-direction to yield nucleoside 5'-phosphates.. Bidirectionally degrades single-stranded DNA into large acid-insoluble oligonucleotides, which are then degraded further into small acid-soluble oligonucleotides. This is Exodeoxyribonuclease 7 small subunit from Photorhabdus laumondii subsp. laumondii (strain DSM 15139 / CIP 105565 / TT01) (Photorhabdus luminescens subsp. laumondii).